A 726-amino-acid chain; its full sequence is Ribonuclease R (726 aa).

The 329-residue stretch at 264–592 (RKDLTELAFV…TVHRLLWMNL (329 aa)) folds into the RNB domain. An S1 motif domain is found at 645–726 (GQTFHGFISA…VQKRAILTLV (82 aa)).

It belongs to the RNR ribonuclease family. RNase R subfamily.

The protein resides in the cytoplasm. It carries out the reaction Exonucleolytic cleavage in the 3'- to 5'-direction to yield nucleoside 5'-phosphates.. Its function is as follows. 3'-5' exoribonuclease that releases 5'-nucleoside monophosphates and is involved in maturation of structured RNAs. This is Ribonuclease R from Mycoplasma pneumoniae (strain ATCC 29342 / M129 / Subtype 1) (Mycoplasmoides pneumoniae).